Consider the following 405-residue polypeptide: Argininosuccinate synthase (405 aa).

Residues 13 to 21 (AYSGGLDTS) and Ala40 contribute to the ATP site. L-citrulline contacts are provided by Tyr91 and Ser96. An ATP-binding site is contributed by Gly121. L-aspartate-binding residues include Thr123, Asn127, and Asp128. Residue Asn127 coordinates L-citrulline. L-citrulline contacts are provided by Arg131, Ser182, Ser191, Glu267, and Tyr279.

This sequence belongs to the argininosuccinate synthase family. Type 1 subfamily. As to quaternary structure, homotetramer.

The protein localises to the cytoplasm. The enzyme catalyses L-citrulline + L-aspartate + ATP = 2-(N(omega)-L-arginino)succinate + AMP + diphosphate + H(+). Its pathway is amino-acid biosynthesis; L-arginine biosynthesis; L-arginine from L-ornithine and carbamoyl phosphate: step 2/3. This chain is Argininosuccinate synthase, found in Rhizobium meliloti (strain 1021) (Ensifer meliloti).